We begin with the raw amino-acid sequence, 640 residues long: ATP-dependent rRNA helicase spb4 (640 aa).

Positions 14–42 match the Q motif motif; it reads WDAVTPALSEWVLEAMSSMGFTRMTPVQA. Residues 45–249 enclose the Helicase ATP-binding domain; that stretch reads IPLFMAHKDV…RVGLRNPVKV (205 aa). 58-65 serves as a coordination point for ATP; the sequence is AVTGSGKT. The DEAD box motif lies at 197-200; it reads DEAD. One can recognise a Helicase C-terminal domain in the interval 283 to 437; it reads ALKRIVSSVQ…SISFSDADAA (155 aa). The stretch at 521-629 forms a coiled coil; it reads AYKDKQREKR…VAKAAGAKAD (109 aa). Disordered regions lie at residues 531 to 593 and 607 to 640; these read RKEL…EEEK and RKKN…QGFD. Basic and acidic residues predominate over residues 577–593; sequence KSKQEKARWEKMTEEEK. Acidic residues predominate over residues 630-640; the sequence is GDDEEEFQGFD.

It belongs to the DEAD box helicase family. DDX55/SPB4 subfamily. Component of pre-60S ribosomal complexes.

It localises to the nucleus. Its subcellular location is the nucleolus. It carries out the reaction ATP + H2O = ADP + phosphate + H(+). Its function is as follows. ATP-binding RNA helicase involved in the biogenesis of 60S ribosomal subunits. Binds 90S pre-ribosomal particles and dissociates from pre-60S ribosomal particles after processing of 27SB pre-rRNA. Required for the normal formation of 18S rRNA through the processing of pre-rRNAs at sites A0, A1 and A2, and the normal formation of 25S and 5.8S rRNAs through the processing of pre-rRNAs at sites C1 and C2. The polypeptide is ATP-dependent rRNA helicase spb4 (Aspergillus fumigatus (strain ATCC MYA-4609 / CBS 101355 / FGSC A1100 / Af293) (Neosartorya fumigata)).